The chain runs to 300 residues: Transcription termination/antitermination protein NusG (300 aa).

The disordered stretch occupies residues 1–99 (MSDPNVNDAI…EAEEPELDPI (99 aa)). Acidic residues-rich tracts occupy residues 14-41 (ESVE…EAAD) and 47-97 (ETDE…PELD).

This sequence belongs to the NusG family.

Participates in transcription elongation, termination and antitermination. The polypeptide is Transcription termination/antitermination protein NusG (Streptomyces coelicolor (strain ATCC BAA-471 / A3(2) / M145)).